Here is a 211-residue protein sequence, read N- to C-terminus: Probable nicotinate-nucleotide adenylyltransferase (211 aa).

The protein belongs to the NadD family.

It carries out the reaction nicotinate beta-D-ribonucleotide + ATP + H(+) = deamido-NAD(+) + diphosphate. Its pathway is cofactor biosynthesis; NAD(+) biosynthesis; deamido-NAD(+) from nicotinate D-ribonucleotide: step 1/1. In terms of biological role, catalyzes the reversible adenylation of nicotinate mononucleotide (NaMN) to nicotinic acid adenine dinucleotide (NaAD). The protein is Probable nicotinate-nucleotide adenylyltransferase of Shewanella sediminis (strain HAW-EB3).